The primary structure comprises 99 residues: uncharacterized protein (99 aa).

Residues 50–77 (SAHWEDARSSGGTSPIRARAGSEGRGCQ) are disordered.

This is an uncharacterized protein from Homo sapiens (Human).